The following is a 130-amino-acid chain: Small ribosomal subunit protein uS8 (130 aa).

The protein belongs to the universal ribosomal protein uS8 family. In terms of assembly, part of the 30S ribosomal subunit. Contacts proteins S5 and S12.

In terms of biological role, one of the primary rRNA binding proteins, it binds directly to 16S rRNA central domain where it helps coordinate assembly of the platform of the 30S subunit. The polypeptide is Small ribosomal subunit protein uS8 (Buchnera aphidicola subsp. Acyrthosiphon pisum (strain 5A)).